Reading from the N-terminus, the 179-residue chain is Ribosome maturation factor RimM (179 aa).

The 78-residue stretch at 102–179 (DGEYYWYQLE…EMKVDWDADF (78 aa)) folds into the PRC barrel domain.

The protein belongs to the RimM family. Binds ribosomal protein uS19.

The protein localises to the cytoplasm. An accessory protein needed during the final step in the assembly of 30S ribosomal subunit, possibly for assembly of the head region. Essential for efficient processing of 16S rRNA. May be needed both before and after RbfA during the maturation of 16S rRNA. It has affinity for free ribosomal 30S subunits but not for 70S ribosomes. This chain is Ribosome maturation factor RimM, found in Pseudomonas savastanoi pv. phaseolicola (strain 1448A / Race 6) (Pseudomonas syringae pv. phaseolicola (strain 1448A / Race 6)).